A 118-amino-acid polypeptide reads, in one-letter code: Mating-type P-specific polypeptide Pc (118 aa).

Positions 29-97 (KTTIYKNGFM…VRKQIAKLER (69 aa)) form a DNA-binding region, HMG box.

The protein resides in the nucleus. In terms of biological role, mating type proteins are sequence specific DNA-binding proteins that act as master switches in yeast differentiation by controlling gene expression in a cell type-specific fashion. Required for conjugation and efficient meiosis. The protein is Mating-type P-specific polypeptide Pc (matPc) of Schizosaccharomyces kambucha (Fission yeast).